The following is a 382-amino-acid chain: Homoserine O-succinyltransferase (382 aa).

One can recognise an AB hydrolase-1 domain in the interval 51–359; the sequence is NAILVCHALS…EATQGHDAFL (309 aa). The active-site Nucleophile is the Ser157. Residue Arg227 coordinates substrate. Residues Asp322 and His355 contribute to the active site. Asp356 contacts substrate.

It belongs to the AB hydrolase superfamily. MetX family. Homodimer.

It is found in the cytoplasm. The catalysed reaction is L-homoserine + succinyl-CoA = O-succinyl-L-homoserine + CoA. The protein operates within amino-acid biosynthesis; L-methionine biosynthesis via de novo pathway; O-succinyl-L-homoserine from L-homoserine: step 1/1. Transfers a succinyl group from succinyl-CoA to L-homoserine, forming succinyl-L-homoserine. The protein is Homoserine O-succinyltransferase of Halorhodospira halophila (strain DSM 244 / SL1) (Ectothiorhodospira halophila (strain DSM 244 / SL1)).